Reading from the N-terminus, the 101-residue chain is Large ribosomal subunit protein bL21 (101 aa).

This sequence belongs to the bacterial ribosomal protein bL21 family. As to quaternary structure, part of the 50S ribosomal subunit. Contacts protein L20.

Its function is as follows. This protein binds to 23S rRNA in the presence of protein L20. The sequence is that of Large ribosomal subunit protein bL21 from Anaeromyxobacter dehalogenans (strain 2CP-1 / ATCC BAA-258).